Reading from the N-terminus, the 217-residue chain is Monomethylamine corrinoid protein 2 (217 aa).

The 91-residue stretch at 1-91 folds into the B12-binding N-terminal domain; that stretch reads MTNTEIFDKL…ELEKNKKEGD (91 aa). In terms of domain architecture, B12-binding spans 93–217; it reads AGLAITFVAE…AAKVALEVMK (125 aa). Position 106 (H106) interacts with methylcob(III)alamin.

Belongs to the methylamine corrinoid protein family. In terms of assembly, can form a complex with MtmB.

The protein operates within one-carbon metabolism; methanogenesis from methylamine. Its function is as follows. Acts as a methyl group carrier between MtmB and MtbA. In Methanosarcina barkeri, this protein is Monomethylamine corrinoid protein 2 (mtmC2).